Consider the following 90-residue polypeptide: UPF0297 protein BH1268 (90 aa).

The protein belongs to the UPF0297 family.

The chain is UPF0297 protein BH1268 from Halalkalibacterium halodurans (strain ATCC BAA-125 / DSM 18197 / FERM 7344 / JCM 9153 / C-125) (Bacillus halodurans).